The primary structure comprises 347 residues: GPN-loop GTPase 2 (347 aa).

Position 12 to 17 (12 to 17) interacts with GTP; that stretch reads GSGKST. Residues 69-71 carry the Gly-Pro-Asn (GPN)-loop; involved in dimer interface motif; the sequence is GPN. Position 175-178 (175-178) interacts with GTP; the sequence is SKID.

Belongs to the GPN-loop GTPase family. Heterodimers with NPA3/GPN1 or GPN3. Binds to RNA polymerase II (RNAPII).

The protein localises to the cytoplasm. Functionally, small GTPase required for proper localization of RNA polymerase II and III (RNAPII and RNAPIII). May act at an RNAP assembly step prior to nuclear import. Required for establishment of sister chromatid cohesion. The polypeptide is GPN-loop GTPase 2 (Saccharomyces cerevisiae (strain ATCC 204508 / S288c) (Baker's yeast)).